Consider the following 464-residue polypeptide: Tyrosine--tRNA ligase, mitochondrial (464 aa).

Residue Tyr61 participates in L-tyrosine binding. An ATP-binding site is contributed by Asp65. The 'HIGH' region motif lies at 66–75; sequence PTADSLHVGN. The L-tyrosine site is built by Asp105, Tyr209, Gln213, Asp216, and Gln235. Residues 270 to 274 carry the 'KMSKS' region motif; that stretch reads KFGKS. ATP is bound at residue Lys273.

It belongs to the class-I aminoacyl-tRNA synthetase family. Homodimer.

It is found in the mitochondrion matrix. The enzyme catalyses tRNA(Tyr) + L-tyrosine + ATP = L-tyrosyl-tRNA(Tyr) + AMP + diphosphate + H(+). Functionally, catalyzes the attachment of tyrosine to tRNA(Tyr) in a two-step reaction: tyrosine is first activated by ATP to form Tyr-AMP and then transferred to the acceptor end of tRNA(Tyr). In Drosophila melanogaster (Fruit fly), this protein is Tyrosine--tRNA ligase, mitochondrial.